The primary structure comprises 179 residues: Large ribosomal subunit protein uL5 (179 aa).

This sequence belongs to the universal ribosomal protein uL5 family. Part of the 50S ribosomal subunit; part of the 5S rRNA/L5/L18/L25 subcomplex. Contacts the 5S rRNA and the P site tRNA. Forms a bridge to the 30S subunit in the 70S ribosome.

In terms of biological role, this is one of the proteins that bind and probably mediate the attachment of the 5S RNA into the large ribosomal subunit, where it forms part of the central protuberance. In the 70S ribosome it contacts protein S13 of the 30S subunit (bridge B1b), connecting the 2 subunits; this bridge is implicated in subunit movement. Contacts the P site tRNA; the 5S rRNA and some of its associated proteins might help stabilize positioning of ribosome-bound tRNAs. This is Large ribosomal subunit protein uL5 from Halorhodospira halophila (strain DSM 244 / SL1) (Ectothiorhodospira halophila (strain DSM 244 / SL1)).